The sequence spans 88 residues: Large ribosomal subunit protein bL31B (88 aa).

The protein belongs to the bacterial ribosomal protein bL31 family. Type B subfamily. Part of the 50S ribosomal subunit.

The sequence is that of Large ribosomal subunit protein bL31B from Bordetella bronchiseptica (strain ATCC BAA-588 / NCTC 13252 / RB50) (Alcaligenes bronchisepticus).